The chain runs to 226 residues: Membrane protein (226 aa).

Topologically, residues 1 to 11 are virion surface; that stretch reads MSNGSIPVDEV. A helical membrane pass occupies residues 12–32; it reads IEHLRNWNFTWNIILTILLVV. Residues 33-41 are Intravirion-facing; the sequence is LQYGHYKYS. Residues 42–62 form a helical membrane-spanning segment; sequence VFLYGVKMAILWILWPLVLAL. The Virion surface segment spans residues 63 to 75; sequence SLFDAWASFQVNW. The helical transmembrane segment at 76–96 threads the bilayer; that stretch reads VFFAFSILMACITLMLWIMYF. The Intravirion portion of the chain corresponds to 97–226; sequence VNSIRLWRRT…TDSEKVPHLV (130 aa). An interaction with N protein region spans residues 200–216; it reads RSKHGDYSAVSNPSAVL.

It belongs to the alphacoronaviruses M protein family. Homomultimer. Interacts with envelope E protein in the budding compartment of the host cell, which is located between endoplasmic reticulum and the Golgi complex. Forms a complex with HE and S proteins. Interacts with nucleocapsid N protein. This interaction probably participates in RNA packaging into the virus.

It is found in the virion membrane. The protein localises to the host Golgi apparatus membrane. Its function is as follows. Component of the viral envelope that plays a central role in virus morphogenesis and assembly via its interactions with other viral proteins. This Sus scrofa (Pig) protein is Membrane protein.